The primary structure comprises 234 residues: Phosphoribosylformylglycinamidine synthase subunit PurQ (234 aa).

Residues 5 to 234 form the Glutamine amidotransferase type-1 domain; the sequence is TVGIVVFPGS…ESLFAHLAGA (230 aa). Cys-89 (nucleophile) is an active-site residue. Catalysis depends on residues His-206 and Glu-208.

In terms of assembly, part of the FGAM synthase complex composed of 1 PurL, 1 PurQ and 2 PurS subunits.

The protein localises to the cytoplasm. The enzyme catalyses N(2)-formyl-N(1)-(5-phospho-beta-D-ribosyl)glycinamide + L-glutamine + ATP + H2O = 2-formamido-N(1)-(5-O-phospho-beta-D-ribosyl)acetamidine + L-glutamate + ADP + phosphate + H(+). It catalyses the reaction L-glutamine + H2O = L-glutamate + NH4(+). It functions in the pathway purine metabolism; IMP biosynthesis via de novo pathway; 5-amino-1-(5-phospho-D-ribosyl)imidazole from N(2)-formyl-N(1)-(5-phospho-D-ribosyl)glycinamide: step 1/2. Its function is as follows. Part of the phosphoribosylformylglycinamidine synthase complex involved in the purines biosynthetic pathway. Catalyzes the ATP-dependent conversion of formylglycinamide ribonucleotide (FGAR) and glutamine to yield formylglycinamidine ribonucleotide (FGAM) and glutamate. The FGAM synthase complex is composed of three subunits. PurQ produces an ammonia molecule by converting glutamine to glutamate. PurL transfers the ammonia molecule to FGAR to form FGAM in an ATP-dependent manner. PurS interacts with PurQ and PurL and is thought to assist in the transfer of the ammonia molecule from PurQ to PurL. The polypeptide is Phosphoribosylformylglycinamidine synthase subunit PurQ (Chlorobaculum tepidum (strain ATCC 49652 / DSM 12025 / NBRC 103806 / TLS) (Chlorobium tepidum)).